Consider the following 184-residue polypeptide: mRNA transport regulator MTR2 (184 aa).

The interval 111-135 is disordered; it reads KMGQDATVPIQPNNTGNRNRPNDMN. Over residues 120-129 the composition is skewed to polar residues; that stretch reads IQPNNTGNRN. Position 125 is a phosphothreonine (T125).

In terms of assembly, interacts with MEX67.

The protein resides in the nucleus. Its function is as follows. Affects mRNA transport from the nucleus to the cytoplasm. The protein is mRNA transport regulator MTR2 (MTR2) of Saccharomyces cerevisiae (strain ATCC 204508 / S288c) (Baker's yeast).